A 256-amino-acid chain; its full sequence is MVIILLLLLLSFLDPSLEESLAPRLTRTPRAPCARGQACDPRQRRDAGGRGGVYEHLGGAPRRRKLYCATKYHLQIHPNGKIDGSLEENNPLSILEITAVDVGVVAIKGLFSGRYLAMNEKGRLYASEVFNRECEFLERIHELGYNTYASRHHATTQPPPTGSGIGGSKRRASSKRQWYVSINGKGRPRRGFKTRSTDKASLFLPRVLANKDHEMVRKLRESQRHHTGSHRAPVGRAERRRRRHRGSKGHNRRADI.

The N-terminal stretch at 1–18 (MVIILLLLLLSFLDPSLE) is a signal peptide. 3 disordered regions span residues 31-54 (APCARGQACDPRQRRDAGGRGGVY), 151-176 (RHHATTQPPPTGSGIGGSKRRASSKR), and 219-256 (LRESQRHHTGSHRAPVGRAERRRRRHRGSKGHNRRADI). The segment covering 238 to 256 (ERRRRRHRGSKGHNRRADI) has biased composition (basic residues).

The protein belongs to the heparin-binding growth factors family.

Its subcellular location is the secreted. Its function is as follows. Plays an important role in the regulation of embryonic development, cell proliferation, and cell differentiation. The protein is Fibroblast growth factor 3 (fgf3) of Danio rerio (Zebrafish).